A 910-amino-acid chain; its full sequence is Alanine--tRNA ligase (910 aa).

A compositionally biased stretch (basic and acidic residues) spans 488–505; sequence RHEEKKEDSKSEKGENTA. The segment at 488-507 is disordered; it reads RHEEKKEDSKSEKGENTAEK. Residues H614, H618, C718, and H722 each coordinate Zn(2+).

The protein belongs to the class-II aminoacyl-tRNA synthetase family. The cofactor is Zn(2+).

It localises to the cytoplasm. The catalysed reaction is tRNA(Ala) + L-alanine + ATP = L-alanyl-tRNA(Ala) + AMP + diphosphate. Catalyzes the attachment of alanine to tRNA(Ala) in a two-step reaction: alanine is first activated by ATP to form Ala-AMP and then transferred to the acceptor end of tRNA(Ala). Also edits incorrectly charged Ser-tRNA(Ala) and Gly-tRNA(Ala) via its editing domain. This Methanococcus aeolicus (strain ATCC BAA-1280 / DSM 17508 / OCM 812 / Nankai-3) protein is Alanine--tRNA ligase.